A 523-amino-acid polypeptide reads, in one-letter code: Ribonuclease Y (523 aa).

A helical membrane pass occupies residues 3 to 23 (VWYAIGSIIFGLLVGVSVYLI). Residues 213–279 (LVNVINLPND…TKTIEKLVED (67 aa)) form the KH domain. The HD domain maps to 339–432 (ALGHSIEVAN…VCAADTLSAA (94 aa)).

This sequence belongs to the RNase Y family.

It is found in the cell membrane. Endoribonuclease that initiates mRNA decay. This chain is Ribonuclease Y, found in Helicobacter hepaticus (strain ATCC 51449 / 3B1).